The sequence spans 89 residues: Small ribosomal subunit protein uS15 (89 aa).

The protein belongs to the universal ribosomal protein uS15 family. As to quaternary structure, part of the 30S ribosomal subunit. Forms a bridge to the 50S subunit in the 70S ribosome, contacting the 23S rRNA.

One of the primary rRNA binding proteins, it binds directly to 16S rRNA where it helps nucleate assembly of the platform of the 30S subunit by binding and bridging several RNA helices of the 16S rRNA. Functionally, forms an intersubunit bridge (bridge B4) with the 23S rRNA of the 50S subunit in the ribosome. The sequence is that of Small ribosomal subunit protein uS15 from Azotobacter vinelandii (strain DJ / ATCC BAA-1303).